A 176-amino-acid chain; its full sequence is tRNA (adenine(37)-N6)-methyltransferase (176 aa).

The 94-residue stretch at 1-94 (SFSHIWVQFV…YLPFVEAQPD (94 aa)) folds into the TsaA-like domain. S-adenosyl-L-methionine-binding positions include His12, 12–13 (HG), Arg40, Leu50, and 74–77 (LDGT).

Belongs to the tRNA methyltransferase O family.

It carries out the reaction N(6)-L-threonylcarbamoyladenosine(37) in tRNA + S-adenosyl-L-methionine = N(6)-methyl,N(6)-L-threonylcarbamoyladenosine(37) in tRNA + S-adenosyl-L-homocysteine + H(+). Its function is as follows. S-adenosyl-L-methionine-dependent methyltransferase responsible for the addition of the methyl group in the formation of N6-methyl-N6-threonylcarbamoyladenosine at position 37 (m(6)t(6)A37) of the tRNA anticodon loop of tRNA(Thr)(GGU). The methyl group of m(6)t(6)A37 appears to slightly improve the efficiency of the tRNA decoding ability. Binds to tRNA. The sequence is that of tRNA (adenine(37)-N6)-methyltransferase from Eikenella corrodens.